The sequence spans 230 residues: Ribose-5-phosphate isomerase A (230 aa).

Substrate contacts are provided by residues 28–31, 83–86, and 97–100; these read TGST, DGAD, and KGLG. Glutamate 106 functions as the Proton acceptor in the catalytic mechanism. Lysine 124 lines the substrate pocket.

It belongs to the ribose 5-phosphate isomerase family. Homodimer.

The enzyme catalyses aldehydo-D-ribose 5-phosphate = D-ribulose 5-phosphate. The protein operates within carbohydrate degradation; pentose phosphate pathway; D-ribose 5-phosphate from D-ribulose 5-phosphate (non-oxidative stage): step 1/1. Its function is as follows. Catalyzes the reversible conversion of ribose-5-phosphate to ribulose 5-phosphate. This Gloeobacter violaceus (strain ATCC 29082 / PCC 7421) protein is Ribose-5-phosphate isomerase A.